The sequence spans 383 residues: Ribosomal RNA large subunit methyltransferase G (383 aa).

Belongs to the methyltransferase superfamily. RlmG family.

Its subcellular location is the cytoplasm. The enzyme catalyses guanosine(1835) in 23S rRNA + S-adenosyl-L-methionine = N(2)-methylguanosine(1835) in 23S rRNA + S-adenosyl-L-homocysteine + H(+). Specifically methylates the guanine in position 1835 (m2G1835) of 23S rRNA. This Shewanella amazonensis (strain ATCC BAA-1098 / SB2B) protein is Ribosomal RNA large subunit methyltransferase G.